The chain runs to 504 residues: Probable protein phosphatase 2C 18 (504 aa).

Residues 1–49 (MGLCYSVDRTTGKEPGEASSTATTAETVEERSGSGRWRRPRDLKGGGDI) form a disordered region. Low complexity predominate over residues 17 to 26 (EASSTATTAE). Residues 67–399 (IACLYTQQGK…DDCTVVCLFL (333 aa)) form the PPM-type phosphatase domain. The Mn(2+) site is built by D103, G104, D344, and D390. Positions 410 to 435 (TNVKKDSPKEESIESVTNSTSKEEDE) are disordered. A compositionally biased stretch (basic and acidic residues) spans 412–421 (VKKDSPKEES).

This sequence belongs to the PP2C family. Mg(2+) serves as cofactor. Requires Mn(2+) as cofactor.

It carries out the reaction O-phospho-L-seryl-[protein] + H2O = L-seryl-[protein] + phosphate. It catalyses the reaction O-phospho-L-threonyl-[protein] + H2O = L-threonyl-[protein] + phosphate. The protein is Probable protein phosphatase 2C 18 of Arabidopsis thaliana (Mouse-ear cress).